The chain runs to 109 residues: Putative transposase MJ0856.1 (109 aa).

Residues C36, C39, C62, and C65 each coordinate Zn(2+).

This sequence belongs to the transposase 35 family.

The protein is Putative transposase MJ0856.1 of Methanocaldococcus jannaschii (strain ATCC 43067 / DSM 2661 / JAL-1 / JCM 10045 / NBRC 100440) (Methanococcus jannaschii).